A 308-amino-acid polypeptide reads, in one-letter code: D-2-hydroxyacid dehydrogenase (308 aa).

NAD(+)-binding positions include 145–146, 224–226, and D250; these read TL and VAR. R226 is a catalytic residue. The active site involves E255. H274 (proton donor) is an active-site residue. 274-277 is an NAD(+) binding site; the sequence is HVSA.

This sequence belongs to the D-isomer specific 2-hydroxyacid dehydrogenase family. As to quaternary structure, homotetramer.

Its function is as follows. Catalyzes the stereospecific NAD(P)H-dependent reduction of 2-ketocarboxylic acids into the corresponding D-2-hydroxycarboxylic acids. Can use both NADPH or NADH as reductant, displaying a marked preference for NADPH over NADH. Shows a broad substrate specificity, although it displays a marked preference for the 2-ketocarboxylic acids having an unbranched chain of 4-5 carbon atoms. This chain is D-2-hydroxyacid dehydrogenase (ddh), found in Haloferax mediterranei (strain ATCC 33500 / DSM 1411 / JCM 8866 / NBRC 14739 / NCIMB 2177 / R-4) (Halobacterium mediterranei).